The following is a 262-amino-acid chain: Zinc finger protein ehn-3 (262 aa).

4 consecutive C2H2-type zinc fingers follow at residues 2-24, 30-52, 59-84, and 92-115; these read EKCD…KVMH, FECQ…MMTH, FECP…DSEH, and AKCK…HTAH. A disordered region spans residues 179-204; sequence SVKSAKELSPTPSTEIETPEEEELDG. Low complexity predominate over residues 185–194; sequence ELSPTPSTEI. Positions 195 to 204 are enriched in acidic residues; that stretch reads ETPEEEELDG. 2 C2H2-type zinc fingers span residues 208–230 and 236–260; these read WYCD…SGLH and FKCS…YANH.

The protein belongs to the krueppel C2H2-type zinc-finger protein family.

The protein localises to the nucleus. Its function is as follows. Together with the zinc finger protein ztf-16, plays a role in gonadogenesis, specifically in somatic gonad precursor cell development. This is possibly by regulating tra-1 gene expression. In terms of biological role, required for proper gonadal primordium assembly and somatic gonad precursor cell morphology. The protein is Zinc finger protein ehn-3 of Caenorhabditis elegans.